The following is a 235-amino-acid chain: uncharacterized protein (235 aa).

Residues Cys-2–Pro-69 form the S4 RNA-binding domain. The active-site Nucleophile is Asp-102.

This sequence belongs to the pseudouridine synthase RsuA family.

It catalyses the reaction a uridine in RNA = a pseudouridine in RNA. This is an uncharacterized protein from Rickettsia prowazekii (strain Madrid E).